Reading from the N-terminus, the 198-residue chain is Ribonuclease HII (198 aa).

Residues 11–198 (ELIAGVDEVG…SPVRKLLENE (188 aa)) enclose the RNase H type-2 domain. Residues aspartate 17, glutamate 18, and aspartate 109 each contribute to the a divalent metal cation site.

It belongs to the RNase HII family. Mn(2+) serves as cofactor. Requires Mg(2+) as cofactor.

It localises to the cytoplasm. The catalysed reaction is Endonucleolytic cleavage to 5'-phosphomonoester.. Its function is as follows. Endonuclease that specifically degrades the RNA of RNA-DNA hybrids. The sequence is that of Ribonuclease HII from Mannheimia succiniciproducens (strain KCTC 0769BP / MBEL55E).